The following is a 79-amino-acid chain: RNA-binding protein Hfq (79 aa).

Residues 10–69 (DPFLNALRKEHVPVSIYLVNGIKLQGNIESFDQYVVLLRNTVTQMVYKHAISTVVPARPV) enclose the Sm domain.

It belongs to the Hfq family. Homohexamer.

In terms of biological role, RNA chaperone that binds small regulatory RNA (sRNAs) and mRNAs to facilitate mRNA translational regulation in response to envelope stress, environmental stress and changes in metabolite concentrations. Also binds with high specificity to tRNAs. In Burkholderia mallei (strain ATCC 23344), this protein is RNA-binding protein Hfq.